The following is a 566-amino-acid chain: Arginine--tRNA ligase (566 aa).

The 'HIGH' region signature appears at 124–134 (ANPNGPLHIGH).

The protein belongs to the class-I aminoacyl-tRNA synthetase family.

It localises to the cytoplasm. It catalyses the reaction tRNA(Arg) + L-arginine + ATP = L-arginyl-tRNA(Arg) + AMP + diphosphate. In Methanocaldococcus jannaschii (strain ATCC 43067 / DSM 2661 / JAL-1 / JCM 10045 / NBRC 100440) (Methanococcus jannaschii), this protein is Arginine--tRNA ligase (argS).